We begin with the raw amino-acid sequence, 120 residues long: Large ribosomal subunit protein bL17 (120 aa).

The protein belongs to the bacterial ribosomal protein bL17 family. In terms of assembly, part of the 50S ribosomal subunit. Contacts protein L32.

This is Large ribosomal subunit protein bL17 from Mycoplasmopsis synoviae (strain 53) (Mycoplasma synoviae).